We begin with the raw amino-acid sequence, 2641 residues long: Inverse autotransporter adhesin YeeJ (2641 aa).

The first 25 residues, M1–A25, serve as a signal peptide directing secretion. One can recognise a LysM domain in the interval V50–V98. The tract at residues T125 to N400 is inverse autotransporter. The segment at Q513–V605 is invasin 3 domain. Big-1 domains lie at H617–I711, I721–V815, Q822–I913, A920–V1017, V1024–A1116, Q1123–V1220, V1227–A1319, Q1326–V1423, L1430–I1523, I1531–V1633, H1641–V1734, E1741–I1837, Q1844–I1941, K1948–V2032, I2048–Q2141, K2142–V2235, and V2244–V2336. Residues K2538–L2641 are C-type lectin domain.

The protein belongs to the intimin/invasin family.

It localises to the cell outer membrane. A probable inverse autotransporter, it may be involved in biofilm formation and cell adhesion. May bind peptidoglycan via its LysM domain. This Escherichia coli O157:H7 protein is Inverse autotransporter adhesin YeeJ (yeeJ).